Here is a 230-residue protein sequence, read N- to C-terminus: Heptaprenylglyceryl phosphate synthase (230 aa).

Lys12 provides a ligand contact to sn-glycerol 1-phosphate. Mg(2+) is bound by residues Asp14 and Ser40. Residues 159–164 (YLEYSG), Gly189, and 209–210 (GN) each bind sn-glycerol 1-phosphate.

The protein belongs to the GGGP/HepGP synthase family. Group I subfamily. Homodimer. It depends on Mg(2+) as a cofactor.

It catalyses the reaction sn-glycerol 1-phosphate + all-trans-heptaprenyl diphosphate = 3-heptaprenyl-sn-glycero-1-phosphate + diphosphate. It functions in the pathway membrane lipid metabolism; glycerophospholipid metabolism. Functionally, prenyltransferase that catalyzes in vivo the transfer of the heptaprenyl moiety of heptaprenyl pyrophosphate (HepPP; 35 carbon atoms) to the C3 hydroxyl of sn-glycerol-1-phosphate (G1P), producing heptaprenylglyceryl phosphate (HepGP). This reaction is an ether-bond-formation step in the biosynthesis of archaea-type G1P-based membrane lipids found in Bacillales. The chain is Heptaprenylglyceryl phosphate synthase from Bacillus pumilus (strain SAFR-032).